Reading from the N-terminus, the 354-residue chain is Homeobox protein Nkx-2.4 (354 aa).

The segment at residues Arg188–Ala247 is a DNA-binding region (homeobox). A disordered region spans residues Arg245–Leu329. Pro residues predominate over residues Gly262–Pro272. Positions Gly290–Gln304 are enriched in low complexity.

This sequence belongs to the NK-2 homeobox family. In terms of tissue distribution, in the embryo it is detected in the posterior hypothalamus and later in the head. In the adult it is detected only in testis.

The protein localises to the nucleus. Functionally, probable transcription factor. This chain is Homeobox protein Nkx-2.4 (Nkx2-4), found in Mus musculus (Mouse).